Reading from the N-terminus, the 316-residue chain is Ribosomal RNA small subunit methyltransferase H (316 aa).

S-adenosyl-L-methionine-binding positions include 35–37, D55, F80, D102, and Q109; that span reads GGH.

This sequence belongs to the methyltransferase superfamily. RsmH family.

The protein resides in the cytoplasm. The catalysed reaction is cytidine(1402) in 16S rRNA + S-adenosyl-L-methionine = N(4)-methylcytidine(1402) in 16S rRNA + S-adenosyl-L-homocysteine + H(+). Specifically methylates the N4 position of cytidine in position 1402 (C1402) of 16S rRNA. The chain is Ribosomal RNA small subunit methyltransferase H from Colwellia psychrerythraea (strain 34H / ATCC BAA-681) (Vibrio psychroerythus).